The following is a 134-amino-acid chain: Methylglyoxal synthase (134 aa).

An MGS-like domain is found at 1-134 (MNIALIAHDN…DWRERVKERG (134 aa)). Substrate is bound by residues H8, K12, 34-37 (TGTT), and 54-55 (SG). The Proton donor/acceptor role is filled by D60. H87 is a binding site for substrate.

Belongs to the methylglyoxal synthase family.

The enzyme catalyses dihydroxyacetone phosphate = methylglyoxal + phosphate. Its function is as follows. Catalyzes the formation of methylglyoxal from dihydroxyacetone phosphate. The sequence is that of Methylglyoxal synthase from Alkaliphilus metalliredigens (strain QYMF).